Here is a 341-residue protein sequence, read N- to C-terminus: Eukaryotic translation initiation factor 3 subunit I (341 aa).

5 WD repeats span residues 8 to 49 (GHER…GTYH), 50 to 91 (GHQG…HTWE), 145 to 184 (CDESKATVAGWSYLAKYIIAGHEDGSVSQYDAKNGDQLHS), 189 to 228 (DMGSEIRDLQWSQDRTYFITASKDKTAKLVTARDLEVLKT), and 286 to 325 (GHFGPLNYVAAEPNGKGYASGGEDGYVRVHQFDKGYFDFM).

Belongs to the eIF-3 subunit I family. Component of the eukaryotic translation initiation factor 3 (eIF-3) complex.

The protein resides in the cytoplasm. Component of the eukaryotic translation initiation factor 3 (eIF-3) complex, which is involved in protein synthesis of a specialized repertoire of mRNAs and, together with other initiation factors, stimulates binding of mRNA and methionyl-tRNAi to the 40S ribosome. The eIF-3 complex specifically targets and initiates translation of a subset of mRNAs involved in cell proliferation. The sequence is that of Eukaryotic translation initiation factor 3 subunit I from Pyricularia oryzae (strain 70-15 / ATCC MYA-4617 / FGSC 8958) (Rice blast fungus).